The chain runs to 99 residues: CLAVATA3/ESR (CLE)-related protein 11 (99 aa).

Positions 1 to 31 (MTKQPKPCSFLFHISLLSALFVFLLISFAFT) are cleaved as a signal peptide. Hydroxyproline occurs at positions 91 and 94. Proline 94 carries O-linked (Ara...) hydroxyproline glycosylation.

The protein belongs to the CLV3/ESR signal peptide family. The O-glycosylation (arabinosylation) of the hydroxyproline Pro-94 enhances binding affinity of the CLE11p peptide for its receptor. Mostly expressed in seedlings, roots and siliques, and, to a lower extent, in leaves, flowers, stems and apex.

The protein localises to the secreted. It localises to the extracellular space. Its function is as follows. Extracellular signal peptide that regulates cell fate. Represses root apical meristem maintenance. Regulates the transition of protophloem cells from proliferation to differentiation, thus impinging on postembryonic growth capacity of the root meristem; this signaling pathway requires CRN and CLV2. This Arabidopsis thaliana (Mouse-ear cress) protein is CLAVATA3/ESR (CLE)-related protein 11.